A 76-amino-acid chain; its full sequence is Putative snRNP Sm-like protein (76 aa).

The 73-residue stretch at 4 to 76 (RPLDVIHRSL…VLAISPVDIE (73 aa)) folds into the Sm domain.

Belongs to the snRNP Sm proteins family.

The polypeptide is Putative snRNP Sm-like protein (Thermococcus gammatolerans (strain DSM 15229 / JCM 11827 / EJ3)).